The following is a 188-amino-acid chain: UPF0301 protein PD_1276 (188 aa).

This sequence belongs to the UPF0301 (AlgH) family.

This Xylella fastidiosa (strain Temecula1 / ATCC 700964) protein is UPF0301 protein PD_1276.